A 213-amino-acid polypeptide reads, in one-letter code: Adenylate kinase (213 aa).

10–15 (GSGKGT) lines the ATP pocket. The interval 30 to 59 (SVGDLLRNIISSESKLGKGIKDTVESGNLI) is NMP. Residues Arg-36, 57–59 (NLI), 83–86 (GFPR), and Gln-90 contribute to the AMP site. Positions 125 to 160 (DRLTCLDCKSIYSISSFKNTTCAKCKSTRLEKRIDD) are LID. Arg-126 lines the ATP pocket. Positions 129 and 132 each coordinate Zn(2+). ATP is bound at residue 135–136 (IY). Zn(2+) is bound by residues Cys-146 and Cys-149. AMP-binding residues include Arg-157 and Arg-169. Leu-195 provides a ligand contact to ATP.

The protein belongs to the adenylate kinase family. As to quaternary structure, monomer.

It is found in the cytoplasm. It catalyses the reaction AMP + ATP = 2 ADP. It functions in the pathway purine metabolism; AMP biosynthesis via salvage pathway; AMP from ADP: step 1/1. Functionally, catalyzes the reversible transfer of the terminal phosphate group between ATP and AMP. Plays an important role in cellular energy homeostasis and in adenine nucleotide metabolism. This chain is Adenylate kinase, found in Wolbachia pipientis subsp. Culex pipiens (strain wPip).